A 385-amino-acid chain; its full sequence is Flavin-dependent monooxygenase (385 aa).

Residues 12–15 (ASIA), 34–36 (EKN), 44–47 (YAID), Arg-105, Tyr-267, Asp-289, and 296–302 (PLSGQGT) each bind FAD.

Belongs to the aromatic-ring hydroxylase family. The cofactor is FAD.

It catalyses the reaction 7-chlorotetracycline + NADPH + O2 + H(+) = (1S,10S,10aS)-3-(CONH2)-9-Cl-1-(Me2N)-3,3a,4,10-(HO)4-10-Me-2,5-dioxo-1H,10aH,11H,11aH-cyclopenta[b]anthracen-6-olate + CO + NADP(+) + H2O. The enzyme catalyses a tetracycline + NADPH + O2 + H(+) = a (1S,10aS)-3-(CONH2)-1-(Me2N)-3,3a,4,6-(HO)4-2,5-dioxo-1H,10aH,11H,11aH-cyclopenta[b]anthracene + CO + NADP(+) + H2O. Inhibited by anhydrotetracycline. In terms of biological role, an FAD-requiring monooxygenase active on tetracycline antibiotic and some of its derivatives, which leads to their inactivation. Expression in E.coli confers high resistance to oxytetracycline, slightly less resistance to tetracycline, moderate resistance to minocycline but no resistance to tigecycline. Degrades tetracycline and oxytetracycline; the reaction requires NADPH. Degrades and confers resistance to chlortetracycline. The chain is Flavin-dependent monooxygenase from Unknown prokaryotic organism.